The following is a 240-amino-acid chain: 1-(5-phosphoribosyl)-5-[(5-phosphoribosylamino)methylideneamino] imidazole-4-carboxamide isomerase (240 aa).

D8 serves as the catalytic Proton acceptor. The active-site Proton donor is D129.

It belongs to the HisA/HisF family.

The protein localises to the cytoplasm. It carries out the reaction 1-(5-phospho-beta-D-ribosyl)-5-[(5-phospho-beta-D-ribosylamino)methylideneamino]imidazole-4-carboxamide = 5-[(5-phospho-1-deoxy-D-ribulos-1-ylimino)methylamino]-1-(5-phospho-beta-D-ribosyl)imidazole-4-carboxamide. It participates in amino-acid biosynthesis; L-histidine biosynthesis; L-histidine from 5-phospho-alpha-D-ribose 1-diphosphate: step 4/9. This is 1-(5-phosphoribosyl)-5-[(5-phosphoribosylamino)methylideneamino] imidazole-4-carboxamide isomerase from Oceanobacillus iheyensis (strain DSM 14371 / CIP 107618 / JCM 11309 / KCTC 3954 / HTE831).